Consider the following 582-residue polypeptide: Phosphoglucomutase, cytoplasmic (582 aa).

Alpha-D-glucose 1,6-bisphosphate contacts are provided by Arg25 and Ser124. Ser124 serves as the catalytic Phosphoserine intermediate. 4 residues coordinate Mg(2+): Ser124, Asp299, Asp301, and Asp303. A Phosphoserine modification is found at Ser124. 6 residues coordinate alpha-D-glucose 1,6-bisphosphate: Asp303, Arg304, Thr367, Glu386, Ser388, and Lys399.

Belongs to the phosphohexose mutase family. Monomer. The cofactor is Mg(2+).

Its subcellular location is the cytoplasm. The enzyme catalyses alpha-D-glucose 1-phosphate = alpha-D-glucose 6-phosphate. It carries out the reaction O-phospho-L-seryl-[protein] + alpha-D-glucose 1-phosphate = alpha-D-glucose 1,6-bisphosphate + L-seryl-[protein]. It catalyses the reaction alpha-D-glucose 1,6-bisphosphate + L-seryl-[protein] = O-phospho-L-seryl-[protein] + alpha-D-glucose 6-phosphate. Functionally, catalyzes the reversible isomerization of alpha-D-glucose 1-phosphate to alpha-D-glucose 6-phosphate. The mechanism proceeds via the intermediate compound alpha-D-glucose 1,6-bisphosphate. This enzyme participates in both the breakdown and synthesis of glucose. The protein is Phosphoglucomutase, cytoplasmic (PGM1) of Populus tremula (European aspen).